We begin with the raw amino-acid sequence, 568 residues long: Glucose-6-phosphate isomerase, cytosolic 1 (568 aa).

The active-site Proton donor is the glutamate 360. Residues histidine 391 and lysine 516 contribute to the active site.

It belongs to the GPI family. Homodimer.

The protein localises to the cytoplasm. It catalyses the reaction alpha-D-glucose 6-phosphate = beta-D-fructose 6-phosphate. Its pathway is carbohydrate degradation; glycolysis; D-glyceraldehyde 3-phosphate and glycerone phosphate from D-glucose: step 2/4. This chain is Glucose-6-phosphate isomerase, cytosolic 1 (PGIC1), found in Clarkia arcuata (Glandular clarkia).